The primary structure comprises 368 residues: CST complex subunit STN1 (368 aa).

Residues 1-185 (MQPGSSRCEE…KVYDQPFHSS (185 aa)) are interaction with CTC1. The segment at residues 57–155 (VDVLGTVIGV…EIHATTYYKV (99 aa)) is a DNA-binding region (OB). Winged helix-turn-helix (wHTH) stretches follow at residues 191-295 (EALS…YVTR) and 296-368 (EDKD…YTAF).

The protein belongs to the STN1 family. Component of the CST complex, composed of TEN1/C17orf106, CTC1/C17orf68 and STN1; in the complex interacts directly with TEN1 and CTC1. Interacts with ACD/TPP1, POT1 and POLA1.

Its subcellular location is the nucleus. The protein resides in the chromosome. The protein localises to the telomere. Its function is as follows. Component of the CST complex proposed to act as a specialized replication factor promoting DNA replication under conditions of replication stress or natural replication barriers such as the telomere duplex. The CST complex binds single-stranded DNA with high affinity in a sequence-independent manner, while isolated subunits bind DNA with low affinity by themselves. Initially the CST complex has been proposed to protect telomeres from DNA degradation. However, the CST complex has been shown to be involved in several aspects of telomere replication. The CST complex inhibits telomerase and is involved in telomere length homeostasis; it is proposed to bind to newly telomerase-synthesized 3' overhangs and to terminate telomerase action implicating the association with the ACD:POT1 complex thus interfering with its telomerase stimulation activity. The CST complex is also proposed to be involved in fill-in synthesis of the telomeric C-strand probably implicating recruitment and activation of DNA polymerase alpha. The CST complex facilitates recovery from many forms of exogenous DNA damage; seems to be involved in the re-initiation of DNA replication at repaired forks and/or dormant origins. Required for efficicient replication of the duplex region of the telomere. Promotes efficient replication of lagging-strand telomeres. Promotes general replication start following replication-fork stalling implicating new origin firing. May be in involved in C-strand fill-in during late S/G2 phase independent of its role in telomere duplex replication. Functionally, component of the CST complex, a complex that binds to single-stranded DNA and is required to protect telomeres from DNA degradation. The CST complex binds single-stranded DNA with high affinity in a sequence-independent manner, while isolated subunits bind DNA with low affinity by themselves. In addition to telomere protection, the CST complex has probably a more general role in DNA metabolism at non-telomeric sites. In Homo sapiens (Human), this protein is CST complex subunit STN1.